The primary structure comprises 367 residues: Chorismate synthase (367 aa).

The interval 39-60 (EEFSHDLQRRASGKSRHTSARR) is disordered. The NADP(+) site is built by Arg-48 and Arg-54. FMN is bound by residues 125–127 (RSS), 238–239 (NA), Gly-278, 293–297 (KPTSS), and Arg-319.

This sequence belongs to the chorismate synthase family. In terms of assembly, homotetramer. It depends on FMNH2 as a cofactor.

The catalysed reaction is 5-O-(1-carboxyvinyl)-3-phosphoshikimate = chorismate + phosphate. It functions in the pathway metabolic intermediate biosynthesis; chorismate biosynthesis; chorismate from D-erythrose 4-phosphate and phosphoenolpyruvate: step 7/7. Functionally, catalyzes the anti-1,4-elimination of the C-3 phosphate and the C-6 proR hydrogen from 5-enolpyruvylshikimate-3-phosphate (EPSP) to yield chorismate, which is the branch point compound that serves as the starting substrate for the three terminal pathways of aromatic amino acid biosynthesis. This reaction introduces a second double bond into the aromatic ring system. In Xanthomonas oryzae pv. oryzae (strain MAFF 311018), this protein is Chorismate synthase.